A 170-amino-acid polypeptide reads, in one-letter code: Cytochrome c-type biogenesis protein CcmE (170 aa).

Topologically, residues M1–R7 are cytoplasmic. A helical; Signal-anchor for type II membrane protein membrane pass occupies residues L8–A28. The Periplasmic segment spans residues L29 to Q170. 2 residues coordinate heme: H122 and Y126. Residues K137–G146 are compositionally biased toward basic and acidic residues. The tract at residues K137–Q170 is disordered.

Belongs to the CcmE/CycJ family.

The protein resides in the cell inner membrane. Functionally, heme chaperone required for the biogenesis of c-type cytochromes. Transiently binds heme delivered by CcmC and transfers the heme to apo-cytochromes in a process facilitated by CcmF and CcmH. The protein is Cytochrome c-type biogenesis protein CcmE of Bradyrhizobium sp. (strain BTAi1 / ATCC BAA-1182).